The chain runs to 521 residues: Bifunctional purine biosynthesis protein PurH (521 aa).

An MGS-like domain is found at 1–145 (MIKQALISVS…KNHRDVTVVV (145 aa)).

It belongs to the PurH family.

The enzyme catalyses (6R)-10-formyltetrahydrofolate + 5-amino-1-(5-phospho-beta-D-ribosyl)imidazole-4-carboxamide = 5-formamido-1-(5-phospho-D-ribosyl)imidazole-4-carboxamide + (6S)-5,6,7,8-tetrahydrofolate. It catalyses the reaction IMP + H2O = 5-formamido-1-(5-phospho-D-ribosyl)imidazole-4-carboxamide. It functions in the pathway purine metabolism; IMP biosynthesis via de novo pathway; 5-formamido-1-(5-phospho-D-ribosyl)imidazole-4-carboxamide from 5-amino-1-(5-phospho-D-ribosyl)imidazole-4-carboxamide (10-formyl THF route): step 1/1. The protein operates within purine metabolism; IMP biosynthesis via de novo pathway; IMP from 5-formamido-1-(5-phospho-D-ribosyl)imidazole-4-carboxamide: step 1/1. This is Bifunctional purine biosynthesis protein PurH from Paraburkholderia xenovorans (strain LB400).